The primary structure comprises 397 residues: Vacuolar protein sorting-associated protein 37A (397 aa).

The tract at residues 1–22 is disordered; sequence MSWLFPLTKSASSSAAGSPGGL. S18 carries the phosphoserine modification. Residues 308–397 enclose the VPS37 C-terminal domain; the sequence is KSTFEKKMQR…AMHSQFHAPL (90 aa).

Belongs to the VPS37 family. As to quaternary structure, component of the ESCRT-I complex (endosomal sorting complex required for transport I) which consists of TSG101, VPS28, a VPS37 protein (VPS37A to -D) and MVB12A or MVB12B in a 1:1:1:1 stoichiometry. Interacts with TSG101, VPS28 and HGS. Component of an ESCRT-I complex (endosomal sorting complex required for transport I) which consists of TSG101, VPS28, VPS37A and UBAP1 in a 1:1:1:1 stoichiometry. As to expression, widely expressed. Examined tissues include heart, brain, placenta, liver, skeletal muscle, kidney and pancreas. More abundant in liver. Strongly decreased or undetected in hepatomas.

The protein localises to the late endosome membrane. It is found in the nucleus. Functionally, component of the ESCRT-I complex, a regulator of vesicular trafficking process. Required for the sorting of endocytic ubiquitinated cargos into multivesicular bodies. May be involved in cell growth and differentiation. The chain is Vacuolar protein sorting-associated protein 37A (VPS37A) from Homo sapiens (Human).